A 144-amino-acid polypeptide reads, in one-letter code: MAFTFAAFCYMLALLLTAALIFFAIWHIIAFDELKTDYKNPIDQCNTLNPLVLPEYLIHAFFCVMFLCAAEWLTLGLNMPLLAYHIWRYMSRPVMSGPGLYDPTTIMNADILAYCQKEGWCKLAFYLLAFFYYLYGMIYVLVSS.

The Cytoplasmic portion of the chain corresponds to 1 to 10 (MAFTFAAFCY). The chain crosses the membrane as a helical span at residues 11 to 31 (MLALLLTAALIFFAIWHIIAF). Residues 32-56 (DELKTDYKNPIDQCNTLNPLVLPEY) lie on the Lumenal side of the membrane. Residues 57–77 (LIHAFFCVMFLCAAEWLTLGL) form a helical membrane-spanning segment. Residues 78 to 122 (NMPLLAYHIWRYMSRPVMSGPGLYDPTTIMNADILAYCQKEGWCK) are Cytoplasmic-facing. The chain crosses the membrane as a helical span at residues 123-143 (LAFYLLAFFYYLYGMIYVLVS). Ser144 is a topological domain (lumenal).

This sequence belongs to the cornichon family. As to quaternary structure, interacts with AREG immature precursor and with immature TGFA, i.e. with a prosegment and lacking full N-glycosylation, but not with the fully N-glycosylated form. In the Golgi apparatus, may form a complex with GORASP55 and transmembrane TGFA.

The protein resides in the endoplasmic reticulum membrane. It is found in the golgi apparatus membrane. Functionally, involved in the selective transport and maturation of TGF-alpha family proteins. The protein is Protein cornichon homolog 1 (CNIH1) of Bos taurus (Bovine).